We begin with the raw amino-acid sequence, 357 residues long: Prostaglandin D2 receptor-like (357 aa).

Residues 1-20 lie on the Extracellular side of the membrane; the sequence is MNESYRCQAATWVERGSSAT. Asn2 carries an N-linked (GlcNAc...) asparagine glycan. Residues 21–41 form a helical membrane-spanning segment; the sequence is MGGVLFSAGLLGNLLALVLLA. The Cytoplasmic portion of the chain corresponds to 42–57; the sequence is RSGLGSCRPGPLHPPP. A helical membrane pass occupies residues 58–78; sequence SVFYVLVCGLTVTHLLGKCLI. At 79–106 the chain is on the extracellular side; the sequence is SPMVLAAYAQNRSLKELLPASGNQLCEA. A glycan (N-linked (GlcNAc...) asparagine) is linked at Asn89. A disulfide bridge connects residues Cys104 and Cys182. Residues 107–127 traverse the membrane as a helical segment; sequence FAFLMSFFGLASTLQLLAMAL. The Cytoplasmic portion of the chain corresponds to 128–149; that stretch reads ECWLSLGHPFFYQRHITARRGV. Residues 150-170 traverse the membrane as a helical segment; that stretch reads LVAPVAGAFSLAFCALPFAGF. Residues 171-194 lie on the Extracellular side of the membrane; the sequence is GKFVQYCPGTWCFIQMIHKKRSFS. The chain crosses the membrane as a helical span at residues 195 to 215; that stretch reads VIGFSVLYSSLMALLVLATVV. The Cytoplasmic portion of the chain corresponds to 216–261; sequence CNLGAMSNLYAMHRRQRHHPRRCSRDRAQSGSDYRHGSPNPLEELD. The chain crosses the membrane as a helical span at residues 262-282; that stretch reads HFVLLALTTVLFTMCSLPLIY. The Extracellular segment spans residues 283–306; sequence RAYYGAFKLVDRADGDSEDLQALR. The helical transmembrane segment at 307–327 threads the bilayer; it reads FLSVISIVDPWIFIIFRTSVF. Residues 328–357 are Cytoplasmic-facing; it reads RMLFHKAFTRPLIYRNWCSHSWQTNMESTL.

The protein belongs to the G-protein coupled receptor 1 family. As to expression, strongly expressed in eye and gastrointestinal tract (GIT), moderately in the brain and oviduct and weakly in the epididymis. In the eye, expressed in the epithelium of the iris and ciliary body and in photoreceptor cells of the retina. In the brain, expressed in leptomeninges, choroid plexus and spinal cord (sensory and motor neurons of the dorsal and ventral horns). In the stomach, expressed in the mucous-secreting goblet cells and the columnar epithelium. Expressed in platelets.

Its subcellular location is the cell membrane. Receptor for prostaglandin D2 (PGD2). The activity of this receptor is mainly mediated by G(s) proteins that stimulate adenylate cyclase, resulting in an elevation of intracellular cAMP. A mobilization of calcium is also observed, but without formation of inositol 1,4,5-trisphosphate. This is Prostaglandin D2 receptor-like (Ptgdrl) from Rattus norvegicus (Rat).